The primary structure comprises 451 residues: Methylenetetrahydrofolate--tRNA-(uracil-5-)-methyltransferase TrmFO (451 aa).

10-15 (GGGLAG) lines the FAD pocket.

It belongs to the MnmG family. TrmFO subfamily. It depends on FAD as a cofactor.

Its subcellular location is the cytoplasm. It carries out the reaction uridine(54) in tRNA + (6R)-5,10-methylene-5,6,7,8-tetrahydrofolate + NADH + H(+) = 5-methyluridine(54) in tRNA + (6S)-5,6,7,8-tetrahydrofolate + NAD(+). The catalysed reaction is uridine(54) in tRNA + (6R)-5,10-methylene-5,6,7,8-tetrahydrofolate + NADPH + H(+) = 5-methyluridine(54) in tRNA + (6S)-5,6,7,8-tetrahydrofolate + NADP(+). Its function is as follows. Catalyzes the folate-dependent formation of 5-methyl-uridine at position 54 (M-5-U54) in all tRNAs. The protein is Methylenetetrahydrofolate--tRNA-(uracil-5-)-methyltransferase TrmFO of Anaeromyxobacter sp. (strain Fw109-5).